Here is a 379-residue protein sequence, read N- to C-terminus: Flap endonuclease 1 (379 aa).

Residues 1–105 (MGVKGLNQLI…GELEKRLLRR (105 aa)) form an N-domain region. A Mg(2+)-binding site is contributed by D34. R47 and R71 together coordinate DNA. Mg(2+) is bound by residues D87, E159, E161, D180, and D182. Residues 123-254 (DMVRYEKRTV…VTAFKLIKEH (132 aa)) are I-domain. Residue E159 coordinates DNA. The DNA site is built by G232 and D234. D234 serves as a coordination point for Mg(2+). The segment at 341–349 (VQGRLDGFF) is interaction with PCNA. Residues 344–379 (RLDGFFQSVPKPKDSADKKRKNDTKSAKSKKAKTRK) are disordered. The segment covering 361 to 379 (KKRKNDTKSAKSKKAKTRK) has biased composition (basic residues).

The protein belongs to the XPG/RAD2 endonuclease family. FEN1 subfamily. In terms of assembly, interacts with PCNA. Three molecules of FEN1 bind to one PCNA trimer with each molecule binding to one PCNA monomer. PCNA stimulates the nuclease activity without altering cleavage specificity. Mg(2+) serves as cofactor. Post-translationally, phosphorylated. Phosphorylation upon DNA damage induces relocalization to the nuclear plasma.

Its subcellular location is the nucleus. It is found in the nucleolus. The protein resides in the nucleoplasm. It localises to the mitochondrion. Functionally, structure-specific nuclease with 5'-flap endonuclease and 5'-3' exonuclease activities involved in DNA replication and repair. During DNA replication, cleaves the 5'-overhanging flap structure that is generated by displacement synthesis when DNA polymerase encounters the 5'-end of a downstream Okazaki fragment. It enters the flap from the 5'-end and then tracks to cleave the flap base, leaving a nick for ligation. Also involved in the long patch base excision repair (LP-BER) pathway, by cleaving within the apurinic/apyrimidinic (AP) site-terminated flap. Acts as a genome stabilization factor that prevents flaps from equilibrating into structures that lead to duplications and deletions. Also possesses 5'-3' exonuclease activity on nicked or gapped double-stranded DNA, and exhibits RNase H activity. Also involved in replication and repair of rDNA and in repairing mitochondrial DNA. This Debaryomyces hansenii (strain ATCC 36239 / CBS 767 / BCRC 21394 / JCM 1990 / NBRC 0083 / IGC 2968) (Yeast) protein is Flap endonuclease 1.